The primary structure comprises 378 residues: Probable E3 ubiquitin-protein ligase LUL3 (378 aa).

The span at 1-21 shows a compositional bias: basic residues; that stretch reads MGISLSKRRRDNNNNHHHPHH. The tract at residues 1–79 is disordered; it reads MGISLSKRRR…PPSQISYRPY (79 aa). Residue G2 is the site of N-myristoyl glycine attachment. Pro residues-rich tracts occupy residues 29–38 and 55–72; these read DPPPQQPPPQ and SLPP…PPPS. The DAR2 domain stretch occupies residues 164–283; the sequence is FVFDALFDGS…GSFKVKVMKQ (120 aa). The RING-type; atypical zinc finger occupies 321-360; it reads CVICLTEPKDTAVMPCRHLCLCSDCAEELRFQTNKCPICR.

Belongs to the RING-type zinc finger family. LOG2 subfamily. Post-translationally, myristoylated (in vitro).

The catalysed reaction is S-ubiquitinyl-[E2 ubiquitin-conjugating enzyme]-L-cysteine + [acceptor protein]-L-lysine = [E2 ubiquitin-conjugating enzyme]-L-cysteine + N(6)-ubiquitinyl-[acceptor protein]-L-lysine.. It functions in the pathway protein modification; protein ubiquitination. Functionally, acts as an E3 ubiquitin-protein ligase, or as part of E3 complex, which accepts ubiquitin from specific E2 ubiquitin-conjugating enzymes and then transfers it to substrates (in vitro). The chain is Probable E3 ubiquitin-protein ligase LUL3 (LUL3) from Arabidopsis thaliana (Mouse-ear cress).